A 237-amino-acid chain; its full sequence is Lectin ConGF (237 aa).

Mn(2+) is bound by residues Glu-8 and Asp-10. The Ca(2+) site is built by Asp-10, Tyr-12, Asn-14, and Asp-19. Asn-14 contacts a carbohydrate. Mn(2+) is bound by residues Asp-19 and His-24. A carbohydrate-binding residues include Leu-99, Tyr-100, Asp-208, and Arg-228.

Belongs to the leguminous lectin family. In terms of assembly, homotetramer; dimer of dimers. Concanavalin A-like lectins of the Diocleinae subtribe undergo proteolytic processing referred to as circular permutation. The propeptide is split into an N-terminal and a C-terminal part, the gamma and beta chain, respectively. These are then religated in beta-gamma order to form the mature alpha chain. The beta and gamma chains can often be detected in cell extracts. Residues 1-118 of the mature chain, as displayed here, probably constitute the beta chain in the propeptide, residues 119-237 the gamma chain.

In terms of biological role, lectin. Induces paw edema in mice. Has a weak vasorelaxant effect on rat aorta. Has anti-inflammatory and anti-nociceptive effects. This is Lectin ConGF from Canavalia grandiflora (Jackbean).